A 132-amino-acid chain; its full sequence is Ribosome-binding factor A (132 aa).

It belongs to the RbfA family. Monomer. Binds 30S ribosomal subunits, but not 50S ribosomal subunits or 70S ribosomes.

It localises to the cytoplasm. Its function is as follows. One of several proteins that assist in the late maturation steps of the functional core of the 30S ribosomal subunit. Associates with free 30S ribosomal subunits (but not with 30S subunits that are part of 70S ribosomes or polysomes). Required for efficient processing of 16S rRNA. May interact with the 5'-terminal helix region of 16S rRNA. The protein is Ribosome-binding factor A of Pseudomonas putida (strain W619).